The following is a 362-amino-acid chain: NAD(P)H-quinone oxidoreductase subunit 1, chloroplastic (362 aa).

The next 8 membrane-spanning stretches (helical) occupy residues Ile27–Val47, Ile94–Val114, Ile128–Gly148, Ala164–Leu184, Phe202–Leu222, Tyr247–Ser267, Thr303–Ile323, and Leu335–Thr355.

Belongs to the complex I subunit 1 family. As to quaternary structure, NDH is composed of at least 16 different subunits, 5 of which are encoded in the nucleus.

Its subcellular location is the plastid. The protein localises to the chloroplast thylakoid membrane. The enzyme catalyses a plastoquinone + NADH + (n+1) H(+)(in) = a plastoquinol + NAD(+) + n H(+)(out). It catalyses the reaction a plastoquinone + NADPH + (n+1) H(+)(in) = a plastoquinol + NADP(+) + n H(+)(out). Functionally, NDH shuttles electrons from NAD(P)H:plastoquinone, via FMN and iron-sulfur (Fe-S) centers, to quinones in the photosynthetic chain and possibly in a chloroplast respiratory chain. The immediate electron acceptor for the enzyme in this species is believed to be plastoquinone. Couples the redox reaction to proton translocation, and thus conserves the redox energy in a proton gradient. The sequence is that of NAD(P)H-quinone oxidoreductase subunit 1, chloroplastic (ndhA) from Oryza sativa (Rice).